A 35-amino-acid polypeptide reads, in one-letter code: Photosystem II reaction center protein M (35 aa).

The helical transmembrane segment at 5–25 (ILAFVATALFILIPTAFLLIL) threads the bilayer.

This sequence belongs to the PsbM family. As to quaternary structure, PSII is composed of 1 copy each of membrane proteins PsbA, PsbB, PsbC, PsbD, PsbE, PsbF, PsbH, PsbI, PsbJ, PsbK, PsbL, PsbM, PsbT, PsbX, PsbY, PsbZ, Psb30/Ycf12, at least 3 peripheral proteins of the oxygen-evolving complex and a large number of cofactors. It forms dimeric complexes.

It is found in the plastid. Its subcellular location is the chloroplast thylakoid membrane. Functionally, one of the components of the core complex of photosystem II (PSII). PSII is a light-driven water:plastoquinone oxidoreductase that uses light energy to abstract electrons from H(2)O, generating O(2) and a proton gradient subsequently used for ATP formation. It consists of a core antenna complex that captures photons, and an electron transfer chain that converts photonic excitation into a charge separation. This subunit is found at the monomer-monomer interface. This chain is Photosystem II reaction center protein M, found in Adiantum capillus-veneris (Maidenhair fern).